The following is a 546-amino-acid chain: Low-affinity methionine permease (546 aa).

The Extracellular segment spans residues 1–70; the sequence is MEPLLFNSGK…QGRHLGVFST (70 aa). Residues 71-91 traverse the membrane as a helical segment; sequence VVLFVSRIMGSGIFAVPSVIL. Residues 92–98 are Cytoplasmic-facing; it reads LNTGGNK. Residues 99–119 traverse the membrane as a helical segment; the sequence is LIYFAIWVFSAAIAFAGLYLF. Residues 120-148 are Extracellular-facing; sequence LEFGSWIPKSGGRKNFLERSFERPRLLIS. A helical transmembrane segment spans residues 149–169; that stretch reads VVFSCYSVLTGYALTGSIVFG. Residues 170-188 are Cytoplasmic-facing; sequence KYVLSAFGVTDDSWSKYVS. Residues 189 to 209 traverse the membrane as a helical segment; the sequence is ISFIIFAVLIHGVSVRHGVFI. Residues 210–213 lie on the Extracellular side of the membrane; sequence QNAL. A helical membrane pass occupies residues 214 to 234; that stretch reads GGLKLIMIVLMCFAGLYTLFF. Topologically, residues 235–254 are cytoplasmic; the sequence is YKSTGQVAWDLPVTQVEKDS. A helical transmembrane segment spans residues 255–275; the sequence is LLSVSSIATAFISSFFCFSGW. Residues 276–297 are Extracellular-facing; sequence DTVHTVTSEIKNPVKTLKVSGP. The chain crosses the membrane as a helical span at residues 298 to 318; it reads LSLIICFVCYTMMNVAYLKVL. Threonine 319 is a topological domain (cytoplasmic). A helical membrane pass occupies residues 320-340; it reads YEEIVSAGPLVGSVLFTKLFG. The Extracellular portion of the chain corresponds to 341 to 346; it reads PRVGGK. The chain crosses the membrane as a helical span at residues 347–367; that stretch reads FIAFSIAISAASNILVVIYSI. Residues 368 to 393 lie on the Cytoplasmic side of the membrane; it reads SRVNQEIFKEGYLPFSIHMSKNWPFD. Residues 394 to 414 traverse the membrane as a helical segment; that stretch reads APLPSISLCGFITIAWILILP. Residues 415–423 lie on the Extracellular side of the membrane; that stretch reads KEGESFNYL. The helical transmembrane segment at 424–444 threads the bilayer; sequence VSMDGYGNQFFLLLVAIGLFI. The Cytoplasmic portion of the chain corresponds to 445–459; the sequence is WRFKHKNEVPEIRAS. Residues 460–480 traverse the membrane as a helical segment; the sequence is TFGVLAIITLSLYMLMAPFFA. Residues 481–494 lie on the Extracellular side of the membrane; that stretch reads DPSLNRVGFLPPYQ. Residues 495–515 form a helical membrane-spanning segment; sequence IMSLLVIVACFFFWLVKFVLL. Over 516 to 546 the chain is Cytoplasmic; the sequence is PKFFHYKLLPKITYLHDGLIVTEWVKKPCLC.

This sequence to yeast high affinity methionine permease (MUP1).

The protein resides in the membrane. Functionally, very low affinity permease for methionine. The sequence is that of Low-affinity methionine permease (MUP3) from Saccharomyces cerevisiae (strain ATCC 204508 / S288c) (Baker's yeast).